We begin with the raw amino-acid sequence, 73 residues long: Mitofissin (73 aa).

This sequence belongs to the ?ATG44? family. Homooligomer. Found as homooctamer in solution, but binds to membranes either as a monomer, dimer, or tetramer, not as an octamer.

Its subcellular location is the mitochondrion intermembrane space. It localises to the vacuole. Its function is as follows. Mitochondrial fission factor that acts directly on lipid membranes to drive mitochondrial fission required for mitophagy. Directly binds to lipid membranes and brings about lipid membrane fragility to facilitate membrane fission and engulfment of mitochondria by the phagophore. The polypeptide is Mitofissin (Saccharomyces cerevisiae (strain ATCC 204508 / S288c) (Baker's yeast)).